The following is a 344-amino-acid chain: Anthranilate phosphoribosyltransferase (344 aa).

5-phospho-alpha-D-ribose 1-diphosphate is bound by residues Gly84, Gly87–Asp88, Ser92, Asn94–Thr97, Lys112–Gly120, and Ser124. Anthranilate is bound at residue Gly84. Ser96 serves as a coordination point for Mg(2+). Asn115 is an anthranilate binding site. Arg170 is an anthranilate binding site. 2 residues coordinate Mg(2+): Asp229 and Glu230.

The protein belongs to the anthranilate phosphoribosyltransferase family. Homodimer. The cofactor is Mg(2+).

It catalyses the reaction N-(5-phospho-beta-D-ribosyl)anthranilate + diphosphate = 5-phospho-alpha-D-ribose 1-diphosphate + anthranilate. It participates in amino-acid biosynthesis; L-tryptophan biosynthesis; L-tryptophan from chorismate: step 2/5. Catalyzes the transfer of the phosphoribosyl group of 5-phosphorylribose-1-pyrophosphate (PRPP) to anthranilate to yield N-(5'-phosphoribosyl)-anthranilate (PRA). This is Anthranilate phosphoribosyltransferase from Synechococcus sp. (strain RCC307).